Reading from the N-terminus, the 368-residue chain is 1-deoxy-D-xylulose 5-phosphate reductoisomerase (368 aa).

NADPH is bound by residues Thr7, Gly8, Ser9, Ile10, Gly31, Lys32, Asn33, and Asn113. Lys114 lines the 1-deoxy-D-xylulose 5-phosphate pocket. Glu115 serves as a coordination point for NADPH. Asp133 contributes to the Mn(2+) binding site. The 1-deoxy-D-xylulose 5-phosphate site is built by Ser134, Glu135, Ser158, and His181. Glu135 contacts Mn(2+). NADPH is bound at residue Gly187. 4 residues coordinate 1-deoxy-D-xylulose 5-phosphate: Ser194, Asn199, Lys200, and Glu203. Glu203 contributes to the Mn(2+) binding site.

Belongs to the DXR family. It depends on Mg(2+) as a cofactor. The cofactor is Mn(2+).

The enzyme catalyses 2-C-methyl-D-erythritol 4-phosphate + NADP(+) = 1-deoxy-D-xylulose 5-phosphate + NADPH + H(+). It participates in isoprenoid biosynthesis; isopentenyl diphosphate biosynthesis via DXP pathway; isopentenyl diphosphate from 1-deoxy-D-xylulose 5-phosphate: step 1/6. In terms of biological role, catalyzes the NADPH-dependent rearrangement and reduction of 1-deoxy-D-xylulose-5-phosphate (DXP) to 2-C-methyl-D-erythritol 4-phosphate (MEP). In Helicobacter pylori (strain P12), this protein is 1-deoxy-D-xylulose 5-phosphate reductoisomerase.